The sequence spans 316 residues: MNPNFLDFEQPIADLQAKIEELRLVGNDNALNISDEISRLQDKSKALTENIFGNLSSWQIAQLARHPKRPYTLDYIGYLFSDFEELHGDRHFADDPAIVGGVARLDGSPVMVIGHQKGREVREKVRRNFGMPRPEGYRKACRLMEMAERFKMPILTFIDTPGAYPGIDAEERGQSEAIAWNLRVMARLKTPIIATVIGEGGSGGALAIGVCDQLNMLQYSTYSVISPEGCASILWKTAEKAPEAAEAMGITAERLKGLGIVDKVIDEPLGGAHRDPASMAESIRGELLTQLKMLQGLEMGELLERRYDRLMSYGAP.

The CoA carboxyltransferase C-terminal domain maps to 39-293 (RLQDKSKALT…RGELLTQLKM (255 aa)).

It belongs to the AccA family. As to quaternary structure, acetyl-CoA carboxylase is a heterohexamer composed of biotin carboxyl carrier protein (AccB), biotin carboxylase (AccC) and two subunits each of ACCase subunit alpha (AccA) and ACCase subunit beta (AccD).

The protein resides in the cytoplasm. The catalysed reaction is N(6)-carboxybiotinyl-L-lysyl-[protein] + acetyl-CoA = N(6)-biotinyl-L-lysyl-[protein] + malonyl-CoA. It functions in the pathway lipid metabolism; malonyl-CoA biosynthesis; malonyl-CoA from acetyl-CoA: step 1/1. Functionally, component of the acetyl coenzyme A carboxylase (ACC) complex. First, biotin carboxylase catalyzes the carboxylation of biotin on its carrier protein (BCCP) and then the CO(2) group is transferred by the carboxyltransferase to acetyl-CoA to form malonyl-CoA. This is Acetyl-coenzyme A carboxylase carboxyl transferase subunit alpha from Pseudomonas aeruginosa (strain LESB58).